The following is a 56-amino-acid chain: Genome polyprotein (56 aa).

Residues 1 to 30 (ETMLDRIASGDLESSVDDPRSAEDKRFESH) are disordered. A compositionally biased stretch (basic and acidic residues) spans 17–30 (DDPRSAEDKRFESH).

It belongs to the picornaviridae polyprotein family. In terms of assembly, homopentamer. Homooligomer. As to quaternary structure, interacts with capsid protein VP2. Interacts with capsid protein VP3. Post-translationally, specific enzymatic cleavages by viral protease in vivo yield a variety of precursors and mature proteins. Polyprotein processing intermediates are produced, such as P1-2A which is a functional precursor of the structural proteins, VP0 which is a VP4-VP2 precursor, VP1-2A precursor, 3ABC precursor which is a stable and catalytically active precursor of 3A, 3B and 3C proteins, 3AB and 3CD precursors. The assembly signal 2A is removed from VP1-2A by a host protease, possibly host Cathepsin L. This cleavage occurs over a region of 3 amino-acids probably generating VP1 proteins with heterogeneous C-termini. In terms of processing, the assembly signal 2A is removed from VP1-2A by a host protease, possibly host Cathepsin L in naked virions. This cleavage does not occur in enveloped virions. This cleavage occurs over a region of 3 amino-acids probably generating VP1 proteins with heterogeneous C-termini.

It localises to the virion. The protein localises to the host endosome. Its subcellular location is the host multivesicular body. Capsid proteins VP1, VP2, and VP3 form a closed capsid enclosing the viral positive strand RNA genome. All these proteins contain a beta-sheet structure called beta-barrel jelly roll. Together they form an icosahedral capsid (T=3) composed of 60 copies of each VP1, VP2, and VP3, with a diameter of approximately 300 Angstroms. VP1 is situated at the 12 fivefold axes, whereas VP2 and VP3 are located at the quasi-sixfold axes. The naked capsid interacts with the host receptor HAVCR1 to provide virion attachment to and probably entry into the target cell. Functionally, precursor component of immature procapsids that corresponds to an extended form of the structural protein VP1. After maturation, possibly by the host Cathepsin L, the assembly signal 2A is cleaved to give rise to the mature VP1 protein. The sequence is that of Genome polyprotein from Callithrix (Owl-faced monkey).